We begin with the raw amino-acid sequence, 414 residues long: EARP and GARP complex-interacting protein 1 (414 aa).

The residue at position 1 (methionine 1) is an N-acetylmethionine. WD repeat units follow at residues 159–199, 209–249, 253–293, and 297–337; these read TAHG…SQAV, KGQL…QIYC, AHGQ…EPVK, and EHSH…SEPF. A disordered region spans residues 337–362; sequence FGHLVDDDDISDQEDHRSEEKSKEPL. A Phosphoserine modification is found at serine 347. Basic and acidic residues predominate over residues 349–362; the sequence is QEDHRSEEKSKEPL. The WD 5 repeat unit spans residues 372 to 412; the sequence is EHEDSVYAVDWSSADPWLFASLSYDGRLVINRVPRALKYHI.

This sequence belongs to the WD repeat EIPR1 family. Interacts with two multisubunit tethering complexes: EARP composed of VPS50, VPS51, VPS52 and VPS53 subunits and GARP complex composed of VPS51, VPS52, VPS53 and VPS54 subunits. Interacts with SNAP29.

Its subcellular location is the golgi apparatus. It is found in the trans-Golgi network. Acts as a component of endosomal retrieval machinery that is involved in protein transport from early endosomes to either recycling endosomes or the trans-Golgi network. Mediates the recruitment of Golgi-associated retrograde protein (GARP) complex to the trans-Golgi network and controls early endosome-to-Golgi transport of internalized protein. Promotes the recycling of internalized transferrin receptor (TFRC) to the plasma membrane through interaction with endosome-associated recycling protein (EARP) complex. Controls proper insulin distribution and secretion, and retention of cargo in mature dense core vesicles. Required for the stability of the endosome-associated retrograde protein (EARP) complex subunits and for proper localization and association of EARP with membranes. The sequence is that of EARP and GARP complex-interacting protein 1 from Pongo abelii (Sumatran orangutan).